The following is an 86-amino-acid chain: Small ribosomal subunit protein uS17 (86 aa).

It belongs to the universal ribosomal protein uS17 family. As to quaternary structure, part of the 30S ribosomal subunit.

In terms of biological role, one of the primary rRNA binding proteins, it binds specifically to the 5'-end of 16S ribosomal RNA. This chain is Small ribosomal subunit protein uS17, found in Streptococcus pyogenes serotype M3 (strain ATCC BAA-595 / MGAS315).